The primary structure comprises 190 residues: Threonylcarbamoyl-AMP synthase (190 aa).

The region spanning 7 to 190 is the YrdC-like domain; it reads RAALSDVLQA…ALTGKQFRQG (184 aa).

This sequence belongs to the SUA5 family. TsaC subfamily.

It localises to the cytoplasm. The catalysed reaction is L-threonine + hydrogencarbonate + ATP = L-threonylcarbamoyladenylate + diphosphate + H2O. In terms of biological role, required for the formation of a threonylcarbamoyl group on adenosine at position 37 (t(6)A37) in tRNAs that read codons beginning with adenine. Catalyzes the conversion of L-threonine, HCO(3)(-)/CO(2) and ATP to give threonylcarbamoyl-AMP (TC-AMP) as the acyladenylate intermediate, with the release of diphosphate. In Yersinia enterocolitica serotype O:8 / biotype 1B (strain NCTC 13174 / 8081), this protein is Threonylcarbamoyl-AMP synthase.